The primary structure comprises 817 residues: tRNA(Met) cytidine acetyltransferase TmcA (817 aa).

ATP is bound by residues Gln265, 289-298 (GRGKSVSVGI), and Arg439. Positions 469-664 (ELIRKMEVYL…YTAIVIKPIS (196 aa)) constitute an N-acetyltransferase domain. Acetyl-CoA contacts are provided by residues 589-591 (IAT), 596-602 (MDLGLGS), Glu629, and Arg636.

The protein belongs to the RNA cytidine acetyltransferase family. TmcA subfamily.

Its subcellular location is the cytoplasm. It carries out the reaction cytidine(34) in elongator tRNA(Met) + acetyl-CoA + ATP + H2O = N(4)-acetylcytidine(34) in elongator tRNA(Met) + ADP + phosphate + CoA + H(+). It catalyses the reaction a cytidine in RNA + acetyl-CoA + ATP + H2O = an N(4)-acetylcytidine in RNA + ADP + phosphate + CoA + H(+). The enzyme catalyses a cytidine in tRNA + acetyl-CoA + ATP + H2O = an N(4)-acetylcytidine in tRNA + ADP + phosphate + CoA + H(+). The catalysed reaction is a cytidine in mRNA + acetyl-CoA + ATP + H2O = an N(4)-acetylcytidine in mRNA + ADP + phosphate + CoA + H(+). In terms of biological role, catalyzes the formation of N(4)-acetylcytidine (ac(4)C) at the wobble position of tRNA(Met), by using acetyl-CoA as an acetyl donor and ATP (or GTP). Its function is as follows. Catalyzes the formation of N(4)-acetylcytidine (ac(4)C) sites in rRNA, tRNA, mRNA and non-coding (nc) RNA, almost always on the middle C of a CCG motif. In hyperthermophiles more acetylation is seen at higher temperatures. The chain is tRNA(Met) cytidine acetyltransferase TmcA from Pyrococcus abyssi (strain GE5 / Orsay).